A 234-amino-acid chain; its full sequence is Small ribosomal subunit protein uS3 (234 aa).

One can recognise a KH type-2 domain in the interval 39–107; that stretch reads IRKFLKKELY…EVSINIKEVK (69 aa).

Belongs to the universal ribosomal protein uS3 family. In terms of assembly, part of the 30S ribosomal subunit. Forms a tight complex with proteins S10 and S14.

Binds the lower part of the 30S subunit head. Binds mRNA in the 70S ribosome, positioning it for translation. The sequence is that of Small ribosomal subunit protein uS3 from Helicobacter acinonychis (strain Sheeba).